A 319-amino-acid chain; its full sequence is Ribosomal large subunit pseudouridine synthase C (319 aa).

In terms of domain architecture, S4 RNA-binding spans 20 to 83; it reads QRIDNFLRTQ…AEREEEAVSP (64 aa). The active site involves Asp-144.

Belongs to the pseudouridine synthase RluA family.

It carries out the reaction uridine(955/2504/2580) in 23S rRNA = pseudouridine(955/2504/2580) in 23S rRNA. In terms of biological role, responsible for synthesis of pseudouridine from uracil at positions 955, 2504 and 2580 in 23S ribosomal RNA. The chain is Ribosomal large subunit pseudouridine synthase C (rluC) from Escherichia coli O6:H1 (strain CFT073 / ATCC 700928 / UPEC).